The chain runs to 71 residues: Plasticin-DA1 (71 aa).

A signal peptide spans 1-22 (MAFLKKSLFLVLFLALVPLSIC). Residues 23–42 (EAEKREEENEEKQEDDDESE) constitute a propeptide that is removed on maturation. The interval 25–45 (EKREEENEEKQEDDDESEKKR) is disordered. Over residues 30–40 (ENEEKQEDDDE) the composition is skewed to acidic residues. Glycine 68 carries the glycine amide modification. The propeptide occupies 70–71 (ER).

It belongs to the frog skin active peptide (FSAP) family. Plasticin subfamily. As to expression, expressed by the skin glands.

The protein localises to the secreted. It is found in the target cell membrane. In terms of biological role, neutral peptide with no antimicrobial activity. Does not permeate bacterial membranes. May act in synergy with cationic peptides by enhancing their activity. Has a moderate hemolytic activity. It interacts with zwitterionic phospholipids (DMPC) without perturbing either the interface or inside of the bilayer, whereas it causes little perturbations at the interface peptide-anionic vesicles (DMPG) as well as in the bilayer alkyl chains. The protein is Plasticin-DA1 of Agalychnis dacnicolor (Giant Mexican leaf frog).